The following is a 169-amino-acid chain: Cell division inhibitor SulA (169 aa).

Positions 106 to 112 are ftsZ binding; sequence ALRTGNY. The segment at 162–169 is lon protease binding; it reads KIHSNLYH.

This sequence belongs to the SulA family. Interacts with FtsZ. Is rapidly cleaved and degraded by the Lon protease once DNA damage is repaired.

In terms of biological role, component of the SOS system and an inhibitor of cell division. Accumulation of SulA causes rapid cessation of cell division and the appearance of long, non-septate filaments. In the presence of GTP, binds a polymerization-competent form of FtsZ in a 1:1 ratio, thus inhibiting FtsZ polymerization and therefore preventing it from participating in the assembly of the Z ring. This mechanism prevents the premature segregation of damaged DNA to daughter cells during cell division. This is Cell division inhibitor SulA from Salmonella choleraesuis (strain SC-B67).